Here is a 460-residue protein sequence, read N- to C-terminus: V-type ATP synthase beta chain 2 (460 aa).

The protein belongs to the ATPase alpha/beta chains family.

Functionally, produces ATP from ADP in the presence of a proton gradient across the membrane. The V-type beta chain is a regulatory subunit. This Clostridium tetani (strain Massachusetts / E88) protein is V-type ATP synthase beta chain 2.